The sequence spans 424 residues: Serpin A11 (424 aa).

An N-terminal signal peptide occupies residues 1-21; the sequence is MGPVWLWLWLLVAEVLLPVHC. N-linked (GlcNAc...) asparagine glycans are attached at residues Asn-108, Asn-171, Asn-352, and Asn-387.

Belongs to the serpin family.

The protein localises to the secreted. This chain is Serpin A11 (Serpina11), found in Mus musculus (Mouse).